We begin with the raw amino-acid sequence, 180 residues long: MTTQLDLIKSSIKSIPNYPKEGIIFRDITTLLEVPAAFKATIDLIVEQYRDKGITKVLGTESRGFIFGAPVALALGLPFELVRKPKKLPRETISQSYQLEYGQDTLEMHVDAISEGDNVLIIDDLLATGGTVEATVKLVQRLGGTVKHAAFVINLPELGGEKRLNNLGVDCYTLVNFEGH.

This sequence belongs to the purine/pyrimidine phosphoribosyltransferase family. Homodimer.

It is found in the cytoplasm. It catalyses the reaction AMP + diphosphate = 5-phospho-alpha-D-ribose 1-diphosphate + adenine. Its pathway is purine metabolism; AMP biosynthesis via salvage pathway; AMP from adenine: step 1/1. Its function is as follows. Catalyzes a salvage reaction resulting in the formation of AMP, that is energically less costly than de novo synthesis. This Haemophilus influenzae (strain PittEE) protein is Adenine phosphoribosyltransferase.